A 244-amino-acid chain; its full sequence is Gas vesicle protein F (244 aa).

Belongs to the gas vesicle GvpF/GvpL family. Binds GvpA.

Its subcellular location is the gas vesicle. A minor component of the gas vesicle, may be involved in preventing GvpA aggregation during gas vesicle nucleation. Gas vesicles (GV) are hollow, gas filled proteinaceous nanostructures. During planktonic growth they allow positioning of the organism at a favorable depth for light or nutrient acquisition. In terms of biological role, cluster expression in E.coli (gvpA1-gvpA2-gvpC-gvpN-gvpJ-gvpK-gvpF-gvpG-gvpV-gvpW) allows cells to float and produces irregularly shaped gas vesicles. The protein is Gas vesicle protein F of Nostoc sp. (strain PCC 7120 / SAG 25.82 / UTEX 2576).